The chain runs to 173 residues: Putative metal-dependent hydrolase BC_2708 (173 aa).

3 residues coordinate Zn(2+): His-65, His-156, and His-160.

The protein belongs to the metal hydrolase YfiT family. As to quaternary structure, homodimer. It depends on Zn(2+) as a cofactor.

The protein resides in the cytoplasm. Its function is as follows. Possible metal-dependent hydrolase. The chain is Putative metal-dependent hydrolase BC_2708 from Bacillus cereus (strain ATCC 14579 / DSM 31 / CCUG 7414 / JCM 2152 / NBRC 15305 / NCIMB 9373 / NCTC 2599 / NRRL B-3711).